Here is a 294-residue protein sequence, read N- to C-terminus: Proteasome subunit beta (294 aa).

Residues 1 to 65 constitute a propeptide, removed in mature form; by autocatalysis; the sequence is MTADRPALRT…MESGDLAPHG (65 aa). Catalysis depends on Thr66, which acts as the Nucleophile.

This sequence belongs to the peptidase T1B family. As to quaternary structure, the 20S proteasome core is composed of 14 alpha and 14 beta subunits that assemble into four stacked heptameric rings, resulting in a barrel-shaped structure. The two inner rings, each composed of seven catalytic beta subunits, are sandwiched by two outer rings, each composed of seven alpha subunits. The catalytic chamber with the active sites is on the inside of the barrel. Has a gated structure, the ends of the cylinder being occluded by the N-termini of the alpha-subunits. Is capped by the proteasome-associated ATPase, ARC.

The protein resides in the cytoplasm. It catalyses the reaction Cleavage of peptide bonds with very broad specificity.. It participates in protein degradation; proteasomal Pup-dependent pathway. Its activity is regulated as follows. The formation of the proteasomal ATPase ARC-20S proteasome complex, likely via the docking of the C-termini of ARC into the intersubunit pockets in the alpha-rings, may trigger opening of the gate for substrate entry. Interconversion between the open-gate and close-gate conformations leads to a dynamic regulation of the 20S proteasome proteolysis activity. Component of the proteasome core, a large protease complex with broad specificity involved in protein degradation. The polypeptide is Proteasome subunit beta (Rhodococcus opacus (strain B4)).